The following is a 97-amino-acid chain: HssA/B-like protein 32 (97 aa).

2 disordered regions span residues 1–23 (MTLF…SLAS) and 62–97 (AKSS…GSCS). The span at 62–74 (AKSSGGSCGGKGG) shows a compositional bias: gly residues. Over residues 75–88 (SHNHGHGHGPHGHG) the composition is skewed to basic residues.

The protein belongs to the hssA/B family.

The polypeptide is HssA/B-like protein 32 (hssl32) (Dictyostelium discoideum (Social amoeba)).